The chain runs to 98 residues: Small ribosomal subunit protein bS6 (98 aa).

It belongs to the bacterial ribosomal protein bS6 family.

Functionally, binds together with bS18 to 16S ribosomal RNA. The polypeptide is Small ribosomal subunit protein bS6 (Moorella thermoacetica (strain ATCC 39073 / JCM 9320)).